The primary structure comprises 296 residues: NAD kinase (296 aa).

Catalysis depends on D72, which acts as the Proton acceptor. Residues 72 to 73, 146 to 147, R157, K174, D176, 187 to 192, and Q247 each bind NAD(+); these read DG, ND, and TAYALS.

It belongs to the NAD kinase family. The cofactor is a divalent metal cation.

It is found in the cytoplasm. The enzyme catalyses NAD(+) + ATP = ADP + NADP(+) + H(+). Functionally, involved in the regulation of the intracellular balance of NAD and NADP, and is a key enzyme in the biosynthesis of NADP. Catalyzes specifically the phosphorylation on 2'-hydroxyl of the adenosine moiety of NAD to yield NADP. This is NAD kinase from Pseudomonas syringae pv. syringae (strain B728a).